Here is a 297-residue protein sequence, read N- to C-terminus: Nuclear transcription factor Y subunit B-11 (297 aa).

The segment at 1–25 (MKSRKSYGHLLSPVGSPPLDNESGE) is disordered. The DNA-binding element occupies 63-69 (LPIANVS). The subunit association domain (SAD) stretch occupies residues 90-101 (VQECVSEFISFV).

Belongs to the NFYB/HAP3 subunit family. Heterotrimeric transcription factor composed of three components, NF-YA, NF-YB and NF-YC. NF-YB and NF-YC must interact and dimerize for NF-YA association and DNA binding. Interacts with NFYC2, NFYC4 and NFYC6. Expressed in roots, culms, nodes, leaf blades, leaf sheaths and young panicles.

The protein resides in the nucleus. The protein localises to the cytoplasm. Its function is as follows. Probable transcription factor involved in the regulation of flowering time under long day (LD) conditions. Functions as a repressor of flowering, independently of HD1 and GHD7. Controls flowering time by negatively regulating the expression of EHD1 and HD3A. Regulates plant height by promoting cell elongation in the internodes. Component of the NF-Y/HAP transcription factor complex. The protein is Nuclear transcription factor Y subunit B-11 (HD5) of Oryza sativa subsp. japonica (Rice).